The sequence spans 295 residues: Nucleotide-binding protein Lxx11490 (295 aa).

Gly19–Ser26 serves as a coordination point for ATP. GTP is bound at residue Asp70–Gly73.

This sequence belongs to the RapZ-like family.

Its function is as follows. Displays ATPase and GTPase activities. This chain is Nucleotide-binding protein Lxx11490, found in Leifsonia xyli subsp. xyli (strain CTCB07).